A 391-amino-acid polypeptide reads, in one-letter code: Zinc finger protein ubi-d4 (391 aa).

Alanine 2 is modified (N-acetylalanine). Glycyl lysine isopeptide (Lys-Gly) (interchain with G-Cter in SUMO2) cross-links involve residues lysine 10, lysine 99, lysine 107, and lysine 108. Disordered regions lie at residues 79-146 and 165-196; these read WRKK…LGEF and DDLD…ARKK. Composition is skewed to basic and acidic residues over residues 100-110 and 126-140; these read PDTDQTLKKEG and DPLE…RVDD. Serine 142 carries the phosphoserine modification. The span at 165–174 shows a compositional bias: acidic residues; that stretch reads DDLDDEDYEE. Tyrosine 172 carries the phosphotyrosine modification. Threonine 176 is modified (phosphothreonine). Glycyl lysine isopeptide (Lys-Gly) (interchain with G-Cter in SUMO2) cross-links involve residues lysine 178 and lysine 196. Position 200 is a phosphoserine (serine 200). A C2H2-type zinc finger spans residues 209 to 232; it reads YACDICGKRYKNRPGLSYHYAHSH. The interval 233–266 is disordered; that stretch reads LAEEEGEDKEDSQPPTPVSQRSEEQKSKKGPDGL. The residue at position 244 (serine 244) is a Phosphoserine. A compositionally biased stretch (basic and acidic residues) spans 253 to 263; the sequence is RSEEQKSKKGP. PHD-type zinc fingers lie at residues 270-330 and 327-377; these read NNYC…CKCC and CKCC…CLDL. Serine 280 is modified (phosphoserine). Lysine 281 participates in a covalent cross-link: Glycyl lysine isopeptide (Lys-Gly) (interchain with G-Cter in SUMO2).

It belongs to the requiem/DPF family. In terms of assembly, interacts with the nucleosomes, in particular nucleosomes bearing histone H3 crotonylated at 'Lys-14' (H3K14cr) for which DPF2 has high affinity. Also interacts (via PHD-type zinc finger domains) with histone H3 butyrylated at 'Lys-14' (H3K14bu), histone H3 propionylated at 'Lys-14' (H3K14pr), and histone H3 acetylated at 'Lys-14' (H3K14ac). Interacts with histone H3 acetylated at 'Lys-9' (H3K9ac), histone H3 di-methylated at 'Lys-9' (H3K9me2), and histone H3 tri-methylated at 'Lys-9' (H3K9me3). Interacts with histone H4 acetylated at 'Lys-12' (H4K12ac). Interacts with histone H4 acetylated at 'Lys-16' (H4K16ac). Interacts with SWI/SNF complex components. Interacts with SMARCA2, SMARCA4, SMARCB1 and SMARCD1. Interacts with SMARCC1, SMARCC2 and ACTL6A. Interacts with RUNX1. Ubiquitous.

It is found in the nucleus. It localises to the cytoplasm. Plays an active role in transcriptional regulation by binding modified histones H3 and H4. Is a negative regulator of myeloid differentiation of hematopoietic progenitor cells. Might also have a role in the development and maturation of lymphoid cells. Involved in the regulation of non-canonical NF-kappa-B pathway. The polypeptide is Zinc finger protein ubi-d4 (DPF2) (Homo sapiens (Human)).